Here is a 255-residue protein sequence, read N- to C-terminus: Sec-independent protein translocase protein TatC (255 aa).

7 helical membrane passes run 28 to 48 (VAAVLLIFAALFYFAQDIYAL), 56 to 76 (YLPEGATMIATGVASPFLAPF), 80 to 100 (LMISLFLAMPVVLHQVWGFIA), 121 to 141 (LFYAGMAFAYFVVFPIMFGFF), 165 to 185 (LFFAFGVAFEVPVATFLLIWV), 195 to 212 (NSRPYVIVGCFVVGMVLT), and 216 to 236 (VFSQTLLAVPMWLLFEIGVFF).

The protein belongs to the TatC family. In terms of assembly, the Tat system comprises two distinct complexes: a TatABC complex, containing multiple copies of TatA, TatB and TatC subunits, and a separate TatA complex, containing only TatA subunits. Substrates initially bind to the TatABC complex, which probably triggers association of the separate TatA complex to form the active translocon.

The protein resides in the cell membrane. Its function is as follows. Part of the twin-arginine translocation (Tat) system that transports large folded proteins containing a characteristic twin-arginine motif in their signal peptide across membranes. Together with TatB, TatC is part of a receptor directly interacting with Tat signal peptides. The sequence is that of Sec-independent protein translocase protein TatC from Azotobacter chroococcum mcd 1.